The primary structure comprises 104 residues: L-rhamnose mutarotase (104 aa).

Residue Y18 coordinates substrate. The active-site Proton donor is H22. Substrate contacts are provided by residues Y41 and 76 to 77 (WW).

The protein belongs to the rhamnose mutarotase family. As to quaternary structure, homodimer.

Its subcellular location is the cytoplasm. It carries out the reaction alpha-L-rhamnose = beta-L-rhamnose. The protein operates within carbohydrate metabolism; L-rhamnose metabolism. Its function is as follows. Involved in the anomeric conversion of L-rhamnose. This Klebsiella pneumoniae subsp. pneumoniae (strain ATCC 700721 / MGH 78578) protein is L-rhamnose mutarotase.